Consider the following 464-residue polypeptide: Cysteine--tRNA ligase (464 aa).

Residue C29 participates in Zn(2+) binding. A 'HIGH' region motif is present at residues 31–41; it reads ATVQGDPHIGH. 3 residues coordinate Zn(2+): C207, H232, and E236. Positions 263–267 match the 'KMSKS' region motif; sequence KMSKS. Residue K266 participates in ATP binding.

It belongs to the class-I aminoacyl-tRNA synthetase family. In terms of assembly, monomer. Zn(2+) serves as cofactor.

It is found in the cytoplasm. The enzyme catalyses tRNA(Cys) + L-cysteine + ATP = L-cysteinyl-tRNA(Cys) + AMP + diphosphate. The chain is Cysteine--tRNA ligase from Rhodococcus jostii (strain RHA1).